The following is a 133-amino-acid chain: MMTETVRTWRHIPQRYNLTGSKCLQCGNVFFPSRIICPECRRKGKLEELKFSGKGRIHSYSVINTPTDEFKDIAPYVVAIVELEEGARVTSQIVDCDPDSIEIGDEVEMVFRKVREEGEDGVISYGFKFKPKT.

The Zn(2+) site is built by cysteine 23, cysteine 26, cysteine 37, and cysteine 40.

It belongs to the scaffold protein DUF35 family. In terms of assembly, interacts with acetoacetyl-CoA thiolase and HMG-CoA synthase (HMGCS) that catalyzes the first and second step in the mevalonate pathway, respectively.

Its function is as follows. Functions as a scaffold to connect the acetoacetyl-CoA thiolase and HMG-CoA synthase (HMGCS) dimers in the channeling thiolase/HMGCS complex, which allows for efficient coupling of the endergonic thiolase reaction with the exergonic HMGCS reaction. The polypeptide is DUF35 domain-containing scaffold protein (Methanothermobacter thermautotrophicus (strain ATCC 29096 / DSM 1053 / JCM 10044 / NBRC 100330 / Delta H) (Methanobacterium thermoautotrophicum)).